An 86-amino-acid polypeptide reads, in one-letter code: Molybdopterin synthase sulfur carrier subunit (86 aa).

1-thioglycine; alternate is present on G86. At G86 the chain carries Glycyl adenylate; alternate.

It belongs to the MoaD family. MOCS2A subfamily. In terms of assembly, heterotetramer; composed of 2 small (mocs2s) and 2 large (mocs2l) subunits. In terms of processing, C-terminal thiocarboxylation occurs in 2 steps, it is first acyl-adenylated (-COAMP) via the hesA/moeB/thiF part of mocs3, then thiocarboxylated (-COSH) via the rhodanese domain of mocs3.

The protein localises to the cytoplasm. It functions in the pathway cofactor biosynthesis; molybdopterin biosynthesis. Its function is as follows. Acts as a sulfur carrier required for molybdopterin biosynthesis. Component of the molybdopterin synthase complex that catalyzes the conversion of precursor Z into molybdopterin by mediating the incorporation of 2 sulfur atoms into precursor Z to generate a dithiolene group. In the complex, serves as sulfur donor by being thiocarboxylated (-COSH) at its C-terminus by mocs3. After interaction with mocs2l, the sulfur is then transferred to precursor Z to form molybdopterin. The protein is Molybdopterin synthase sulfur carrier subunit (mocs2s) of Dictyostelium discoideum (Social amoeba).